A 154-amino-acid polypeptide reads, in one-letter code: UPF0178 protein YaiI (154 aa).

Belongs to the UPF0178 family.

The polypeptide is UPF0178 protein YaiI (Escherichia coli (strain ATCC 8739 / DSM 1576 / NBRC 3972 / NCIMB 8545 / WDCM 00012 / Crooks)).